Consider the following 786-residue polypeptide: Endonuclease MutS2 (786 aa).

335–342 (GPNTGGKT) provides a ligand contact to ATP. One can recognise a Smr domain in the interval 711–786 (LDLRGERFEN…GLGVTVVELK (76 aa)).

The protein belongs to the DNA mismatch repair MutS family. MutS2 subfamily. As to quaternary structure, homodimer. Binds to stalled ribosomes, contacting rRNA.

Endonuclease that is involved in the suppression of homologous recombination and thus may have a key role in the control of bacterial genetic diversity. In terms of biological role, acts as a ribosome collision sensor, splitting the ribosome into its 2 subunits. Detects stalled/collided 70S ribosomes which it binds and splits by an ATP-hydrolysis driven conformational change. Acts upstream of the ribosome quality control system (RQC), a ribosome-associated complex that mediates the extraction of incompletely synthesized nascent chains from stalled ribosomes and their subsequent degradation. Probably generates substrates for RQC. This Bacillus anthracis (strain A0248) protein is Endonuclease MutS2.